A 613-amino-acid chain; its full sequence is MLFRGLSLWMLFLASCLSALALPAAEDDGSVKVFKRAKKHSTKQEGPSYAPYYVDCPSDNIVESLSSNEIPSAESEYLSTRSTITNTAMKDFLRNANLPGLNADTLSGSEGPSIGIALSGGGLRAMILGSGALSAMDARHDNHTVLTGLLQASDYLVGTDGSAWTVGGIALNNFSTINDFSKLWAFNHPLMYPKSAIVFNAHFYSSIMNEVAEKANAGFNISLSDYWGRVISRTLGDTTYGFPNVSLSSITSQEWYRNANFPYPIITFATQNYGEDISNVNTTFFEASPNVFGTFDHGINSFIPTEYLGTTLNNGASSNGSCVINYDNFGFMMGASSTYFNKIMRNFNDSSTKNGRIIQQYLKGNFSENGQQIISIPNPFQGVESANSDAANNLGSSSSLNLVDTFLTGEKIPLWPLLQKGRDVDVIVAVDNGDDSEWLWPNGNSLVQTYERVVAAQAAGNTNVKGFPYVPSQQSFVSLHFNDRPVFFGCDGRNTTAGNHTVTRDTPPLVIYLPNVPYNYFTNISTDRTYYTEDMIQQLLTNGLISSTVDNDTYFGQCFACAVVKRTLERNNITASPECQQCYYNYCWSGLYDDSAANDDIVYNPTCRLGEGI.

The first 21 residues, 1–21 (MLFRGLSLWMLFLASCLSALA), serve as a signal peptide directing secretion. The PLA2c domain occupies 55–593 (DCPSDNIVES…YNYCWSGLYD (539 aa)). Residues N142, N173, N220, N244, N281, N319, N348, N365, N494, N499, N523, N551, and N572 are each glycosylated (N-linked (GlcNAc...) asparagine).

This sequence belongs to the lysophospholipase family.

It localises to the secreted. It carries out the reaction a 1-acyl-sn-glycero-3-phosphocholine + H2O = sn-glycerol 3-phosphocholine + a fatty acid + H(+). Its function is as follows. Catalyzes the release of fatty acids from lysophospholipids. Required for survival under high osmolarity, for normal osmotic stress-induced gene expression, and for nutrient-mediated repression of sexual differentiation. The protein is Lysophospholipase 1 (plb1) of Schizosaccharomyces pombe (strain 972 / ATCC 24843) (Fission yeast).